Consider the following 468-residue polypeptide: Zinc finger protein mex-5 (468 aa).

Low complexity predominate over residues Met-1–Thr-19. The interval Met-1–Pro-32 is disordered. Thr-186 is subject to Phosphothreonine; by mbk-2. A compositionally biased stretch (basic and acidic residues) spans Asn-243–Gly-254. Residues Asn-243–Pro-269 are disordered. 2 consecutive C3H1-type zinc fingers follow at residues Asn-270–Lys-299 and Lys-314–Asp-344. The tract at residues Asp-414–Tyr-468 is disordered. The span at Ser-451–Glu-460 shows a compositional bias: polar residues. At Ser-458 the chain carries Phosphoserine.

As to quaternary structure, interacts (when phosphorylated on Thr-186) with plk-1 (via POLO box domain) and plk-2 (via POLO box domain). Phosphorylation on Ser-458 by par-1 promotes localization of the protein to the anterior cytoplasm of the zygote. Phosphorylation by mbk-1 appears to be required for subsequent phosphorylation by plk-1. In terms of tissue distribution, asymmetrically localized to the anterior of the zygote before mitotic division, then differentially distributed to the somatic blastomere precursor cells.

Its subcellular location is the cytoplasm. In terms of biological role, functions with mex-6 to affect embryonic viability, establish soma germline asymmetry in embryos and establish plk-1, pie-1, mex-1, and pos-1 asymmetry in embryos. Also affects formation of intestinal cells. Binds to mRNA in vitro, and inhibits pgl-3-mediated P-granule formation, probably by competing with pgl-3 for binding to mRNA. Required for neg-1 expression in anterior blastomeres during embryogenesis. This is Zinc finger protein mex-5 from Caenorhabditis elegans.